The chain runs to 381 residues: Alcohol dehydrogenase-like 6 (381 aa).

8 residues coordinate Zn(2+): C53, S55, H72, C102, C105, C108, C116, and C179. An alcohol contacts are provided by S55 and H72. S55 is an NAD(+) binding site. Residues 204–209 (GLGTVG), D228, K233, 297–299 (LGV), F324, and R374 contribute to the NAD(+) site.

The protein belongs to the zinc-containing alcohol dehydrogenase family. Class-III subfamily. In terms of assembly, homodimer. Zn(2+) serves as cofactor.

It localises to the cytoplasm. It catalyses the reaction a primary alcohol + NAD(+) = an aldehyde + NADH + H(+). It carries out the reaction a secondary alcohol + NAD(+) = a ketone + NADH + H(+). The sequence is that of Alcohol dehydrogenase-like 6 from Arabidopsis thaliana (Mouse-ear cress).